Here is a 275-residue protein sequence, read N- to C-terminus: 4-diphosphocytidyl-2-C-methyl-D-erythritol kinase (275 aa).

The active site involves K9. Position 90 to 100 (90 to 100 (PVGGGLGGGSS)) interacts with ATP. Residue D132 is part of the active site.

The protein belongs to the GHMP kinase family. IspE subfamily.

It carries out the reaction 4-CDP-2-C-methyl-D-erythritol + ATP = 4-CDP-2-C-methyl-D-erythritol 2-phosphate + ADP + H(+). It functions in the pathway isoprenoid biosynthesis; isopentenyl diphosphate biosynthesis via DXP pathway; isopentenyl diphosphate from 1-deoxy-D-xylulose 5-phosphate: step 3/6. Functionally, catalyzes the phosphorylation of the position 2 hydroxy group of 4-diphosphocytidyl-2C-methyl-D-erythritol. The polypeptide is 4-diphosphocytidyl-2-C-methyl-D-erythritol kinase (Sulfurihydrogenibium sp. (strain YO3AOP1)).